Reading from the N-terminus, the 312-residue chain is Ribosomal protein L11 methyltransferase (312 aa).

The S-adenosyl-L-methionine site is built by Thr160, Gly181, Asp203, and Asn246.

Belongs to the methyltransferase superfamily. PrmA family.

It is found in the cytoplasm. The catalysed reaction is L-lysyl-[protein] + 3 S-adenosyl-L-methionine = N(6),N(6),N(6)-trimethyl-L-lysyl-[protein] + 3 S-adenosyl-L-homocysteine + 3 H(+). Methylates ribosomal protein L11. The chain is Ribosomal protein L11 methyltransferase from Staphylococcus aureus (strain bovine RF122 / ET3-1).